Reading from the N-terminus, the 666-residue chain is Frizzled-3 (666 aa).

The N-terminal stretch at 1–22 (MAMTWIVFSLWPLTVFMGHIGG) is a signal peptide. One can recognise an FZ domain in the interval 23–136 (HSLFSCEPIT…CSRFPDCDEP (114 aa)). At 23 to 205 (HSLFSCEPIT…REELSFARYF (183 aa)) the chain is on the extracellular side. Disulfide bonds link C28–C89, C36–C82, C73–C110, C99–C133, and C103–C127. A glycan (N-linked (GlcNAc...) asparagine) is linked at N42. Residues 206-226 (IGLISIICLSATLFTFLTFLI) traverse the membrane as a helical segment. Over 227–237 (DVTRFRYPERP) the chain is Cytoplasmic. Residues 238-258 (IIFYAVCYMMVSLIFFIGFLL) form a helical membrane-spanning segment. At 259–288 (EDRVACNASIPAQYKASTVTQGSHNKACTM) the chain is on the extracellular side. The N-linked (GlcNAc...) asparagine glycan is linked to N265. Residues 289–309 (LFMILYFFTMAGSVWWVILTI) form a helical membrane-spanning segment. At 310–328 (TWFLAAVPKWGSEAIEKKA) the chain is on the cytoplasmic side. A helical membrane pass occupies residues 329–349 (LLFHASAWGIPGTLTIILLAM). The Extracellular portion of the chain corresponds to 350–374 (NKIEGDNISGVCFVGLYDVDALRYF). N356 carries an N-linked (GlcNAc...) asparagine glycan. A helical transmembrane segment spans residues 375–395 (VLAPLCLYVVVGVSLLLAGII). Residues 396–420 (SLNRVRIEIPLEKENQDKLVKFMIR) are Cytoplasmic-facing. The chain crosses the membrane as a helical span at residues 421–441 (IGVFSILYLVPLLVVIGCYFY). Residues 442-477 (EQAYRGIWETTWIQERCREYHIPCPYQVTQMSRPDL) lie on the Extracellular side of the membrane. Residues 478–498 (ILFLMKYLMALIVGIPSVFWV) form a helical membrane-spanning segment. Residues 499-666 (GSKKTCFEWA…RVIEEDGTSA (168 aa)) lie on the Cytoplasmic side of the membrane. The short motif at 502–507 (KTCFEW) is the Lys-Thr-X-X-X-Trp motif, mediates interaction with the PDZ domain of Dvl family members element. The tract at residues 538–666 (RDPNTPIIRK…RVIEEDGTSA (129 aa)) is disordered. The segment covering 550–565 (GTSTQGTSTHASSTQL) has biased composition (polar residues). Residues 617–638 (LTDHSRHSSSHRLNEQSRHSSI) show a composition bias toward basic and acidic residues. The segment covering 639-656 (RDLSNNPMTHITHGTSMN) has biased composition (polar residues).

The protein belongs to the G-protein coupled receptor Fz/Smo family. Interacts with VANGL2. Post-translationally, ubiquitinated by ZNRF3, leading to its degradation by the proteasome. Widely expressed. Relatively high expression in the CNS, including regions of the limbic system, in kidney, pancreas, skeletal muscle, uterus and testis.

The protein localises to the membrane. It is found in the cell membrane. Its subcellular location is the cell surface. The protein resides in the apical cell membrane. In terms of biological role, receptor for Wnt proteins. Most of frizzled receptors are coupled to the beta-catenin canonical signaling pathway, which leads to the activation of disheveled proteins, inhibition of GSK-3 kinase, nuclear accumulation of beta-catenin and activation of Wnt target genes. A second signaling pathway involving PKC and calcium fluxes has been seen for some family members, but it is not yet clear if it represents a distinct pathway or if it can be integrated in the canonical pathway, as PKC seems to be required for Wnt-mediated inactivation of GSK-3 kinase. Both pathways seem to involve interactions with G-proteins. Activation by Wnt5A stimulates PKC activity via a G-protein-dependent mechanism. Involved in transduction and intercellular transmission of polarity information during tissue morphogenesis and/or in differentiated tissues. Plays a role in controlling early axon growth and guidance processes necessary for the formation of a subset of central and peripheral major fiber tracts. Required for the development of major fiber tracts in the central nervous system, including: the anterior commissure, the corpus callosum, the thalamocortical, corticothalamic and nigrostriatal tracts, the corticospinal tract, the fasciculus retroflexus, the mammillothalamic tract, the medial lemniscus, and ascending fiber tracts from the spinal cord to the brain. In the peripheral nervous system, controls axon growth in distinct populations of cranial and spinal motor neurons, including the facial branchimotor nerve, the hypoglossal nerve, the phrenic nerve, and motor nerves innervating dorsal limbs. Involved in the migration of cranial neural crest cells. May also be implicated in the transmission of sensory information from the trunk and limbs to the brain. Controls commissural sensory axons guidance after midline crossing along the anterior-posterior axis in the developing spinal cord in a Wnt-dependent signaling pathway. Together with FZD6, is involved in the neural tube closure and plays a role in the regulation of the establishment of planar cell polarity (PCP), particularly in the orientation of asymmetric bundles of stereocilia on the apical faces of a subset of auditory and vestibular sensory cells located in the inner ear. Promotes neurogenesis by maintaining sympathetic neuroblasts within the cell cycle in a beta-catenin-dependent manner. In Homo sapiens (Human), this protein is Frizzled-3 (FZD3).